Here is a 1894-residue protein sequence, read N- to C-terminus: Plexin-A2 (1894 aa).

The first 34 residues, 1–34 (MEQRRFYLRAMQADNLSVVLLSVAWLLLARGTTG), serve as a signal peptide directing secretion. Residues asparagine 15 and asparagine 76 are each glycosylated (N-linked (GlcNAc...) asparagine). In terms of domain architecture, Sema spans 35–508 (MPQYSTFHSE…SERQVTRVPV (474 aa)). Residues 35 to 1237 (MPQYSTFHSE…VISDSLLTLP (1203 aa)) lie on the Extracellular side of the membrane. Disulfide bonds link cysteine 94-cysteine 103 and cysteine 129-cysteine 137. N-linked (GlcNAc...) asparagine glycans are attached at residues asparagine 163 and asparagine 327. 8 disulfide bridges follow: cysteine 284-cysteine 405, cysteine 300-cysteine 356, cysteine 374-cysteine 393, cysteine 511-cysteine 528, cysteine 517-cysteine 559, cysteine 520-cysteine 537, cysteine 531-cysteine 543, and cysteine 594-cysteine 613. N-linked (GlcNAc...) asparagine glycans are attached at residues asparagine 598, asparagine 696, and asparagine 756. IPT/TIG domains are found at residues 858–951 (PQIT…QYTF), 954–1037 (PSVL…QFEY), 1041–1139 (PRVQ…KFIY), and 1143–1228 (PTFE…SVSV). Residues asparagine 1180 and asparagine 1205 are each glycosylated (N-linked (GlcNAc...) asparagine). The chain crosses the membrane as a helical span at residues 1238 to 1258 (AIISIAAGGSLLLIIVIIVLI). Topologically, residues 1259–1894 (AYKRKSREND…HLINAMSIES (636 aa)) are cytoplasmic. Residues 1261-1310 (KRKSRENDLTLKRLQMQMDNLESRVALECKEAFAELQTDINELTSDLDRS) adopt a coiled-coil conformation. Residue serine 1612 is modified to Phosphoserine.

It belongs to the plexin family. As to quaternary structure, homodimer. Interacts with RND1. Interacts directly with NRP1 and NRP2. The PLXNA2 homodimer interacts with a SEMA6A homodimer, giving rise to a heterotetramer.

The protein localises to the cell membrane. In terms of biological role, coreceptor for SEMA3A and SEMA6A. Necessary for signaling by SEMA6A and class 3 semaphorins and subsequent remodeling of the cytoskeleton. Plays a role in axon guidance, invasive growth and cell migration. Class 3 semaphorins bind to a complex composed of a neuropilin and a plexin. The plexin modulates the affinity of the complex for specific semaphorins, and its cytoplasmic domain is required for the activation of down-stream signaling events in the cytoplasm. The sequence is that of Plexin-A2 (Plxna2) from Mus musculus (Mouse).